The primary structure comprises 186 residues: Elongation factor P (186 aa).

Belongs to the elongation factor P family.

It localises to the cytoplasm. It participates in protein biosynthesis; polypeptide chain elongation. In terms of biological role, involved in peptide bond synthesis. Stimulates efficient translation and peptide-bond synthesis on native or reconstituted 70S ribosomes in vitro. Probably functions indirectly by altering the affinity of the ribosome for aminoacyl-tRNA, thus increasing their reactivity as acceptors for peptidyl transferase. This chain is Elongation factor P, found in Laribacter hongkongensis (strain HLHK9).